Consider the following 510-residue polypeptide: RanBP-type and C3HC4-type zinc finger-containing protein 1 (510 aa).

The residue at position 1 (M1) is an N-acetylmethionine. Positions 1–220 (MDEKTKKAEE…PGCEMCCRAR (220 aa)) are interaction with IRF3. The tract at residues 1–270 (MDEKTKKAEE…NYLQHVQLDQ (270 aa)) is interaction with TAB2. Residue S50 is modified to Phosphoserine. Positions 55–119 (IRLWVSVEDA…DQETLHSHGV (65 aa)) constitute a Ubiquitin-like domain. The tract at residues 69-131 (VTIWLTVRPD…NGDSAYLYLL (63 aa)) is interaction with RNF31. The interval 160–192 (LTLQPRGPLEPGPPKPGVPQEPGRGQPDAVPEP) is disordered. Residues 167–178 (PLEPGPPKPGVP) show a composition bias toward pro residues. A RanBP2-type zinc finger spans residues 193–222 (PPVGWQCPGCTFINKPTRPGCEMCCRARPE). Positions 233–261 (DEEERARLAGEEEALRQYQQRKQQQQEGN) form a coiled coil. The tract at residues 278–506 (EPAECPVCYS…VNGIPCHPSC (229 aa)) is TRIAD supradomain. Zn(2+)-binding residues include C282, C285, C300, H302, C305, C308, and C323. The segment at 282–332 (CPVCYSVLAPGEAVVLRECLHTFCRECLQGTIRNSQEAEVSCPFIDNTYSC) adopts an RING-type 1 zinc-finger fold. At Y330 the chain carries Phosphotyrosine. Zn(2+) is bound by residues C332, C371, C376, C391, C394, C399, C402, H406, C411, C447, and C450. The segment at 351-411 (QRFLDLGISI…CKAIHEQMNC (61 aa)) adopts an IBR-type zinc-finger fold. The RING-type 2; atypical zinc finger occupies 447 to 476 (CPQCQIVVQKKDGCDWIRCTVCHTEICWVT). Residue C460 is part of the active site. Zn(2+) is bound by residues C465 and C468.

This sequence belongs to the RBR family. Component of the LUBAC complex (linear ubiquitin chain assembly complex) which consists of SHARPIN, RBCK1 and RNF31. LUBAC has a MW of approximately 600 kDa suggesting a heteromultimeric assembly of its subunits. Interacts with beta-I-type (PRKCB1) and zeta-type protein kinase C (PRKCZ). Interacts with UBE2L3. Interacts with PRKCH. Associates with the TNF-R1 signaling complex (TNF-RSC) in a stimulation-dependent manner. Interacts with EYA1, TAB2, TAB3, MAP3K7 TRAF6 and RIPK1. Interacts with IRF3. As to quaternary structure, interacts with IREB2 only in iron-rich conditions. In terms of assembly, (Microbial infection) Interacts with hepatitis B virus/HBV protein HBx; this interaction is required to activate transcription of the viral genome. Auto-ubiquitinated. Auto-ubiquitination leads to degradation by the proteasome. In terms of processing, phosphorylated. In vitro, phosphorylation inhibits auto-ubiquitination activity. Post-translationally, (Microbial infection) Ubiquitinated by S.flexneri E3 ubiquitin-protein ligases IpaH1.4 and IpaH2.5, leading to its degradation by the proteasome, thereby preventing formation of the bacterial ubiquitin coat and activation of innate immunity.

The catalysed reaction is [E2 ubiquitin-conjugating enzyme]-S-ubiquitinyl-L-cysteine + [acceptor protein]-L-lysine = [E2 ubiquitin-conjugating enzyme]-L-cysteine + [acceptor protein]-N(6)-ubiquitinyl-L-lysine.. It functions in the pathway protein modification; protein ubiquitination. Functionally, E3 ubiquitin-protein ligase, which accepts ubiquitin from specific E2 ubiquitin-conjugating enzymes, such as UBE2L3/UBCM4, and then transfers it to substrates. Functions as an E3 ligase for oxidized IREB2 and both heme and oxygen are necessary for IREB2 ubiquitination. Promotes ubiquitination of TAB2 and IRF3 and their degradation by the proteasome. Component of the LUBAC complex which conjugates linear ('Met-1'-linked) polyubiquitin chains to substrates and plays a key role in NF-kappa-B activation and regulation of inflammation. LUBAC conjugates linear polyubiquitin to IKBKG and RIPK1 and is involved in activation of the canonical NF-kappa-B and the JNK signaling pathways. Linear ubiquitination mediated by the LUBAC complex interferes with TNF-induced cell death and thereby prevents inflammation. LUBAC is recruited to the TNF-R1 signaling complex (TNF-RSC) following polyubiquitination of TNF-RSC components by BIRC2 and/or BIRC3 and to conjugate linear polyubiquitin to IKBKG and possibly other components contributing to the stability of the complex. The LUBAC complex is also involved in innate immunity by conjugating linear polyubiquitin chains at the surface of bacteria invading the cytosol to form the ubiquitin coat surrounding bacteria. LUBAC is not able to initiate formation of the bacterial ubiquitin coat, and can only promote formation of linear polyubiquitins on pre-existing ubiquitin. The bacterial ubiquitin coat acts as an 'eat-me' signal for xenophagy and promotes NF-kappa-B activation. Together with OTULIN, the LUBAC complex regulates the canonical Wnt signaling during angiogenesis. Binds polyubiquitin of different linkage types. The sequence is that of RanBP-type and C3HC4-type zinc finger-containing protein 1 (RBCK1) from Homo sapiens (Human).